Consider the following 192-residue polypeptide: Ion-translocating oxidoreductase complex subunit A (192 aa).

6 helical membrane-spanning segments follow: residues 5-25 (FLLF…FLGL), 39-59 (VGMS…SYIV), 63-83 (ILLP…VIAV), 102-122 (LLGI…LALL), 134-154 (IIYG…FSSM), and 171-191 (SIAM…TGLI).

It belongs to the NqrDE/RnfAE family. The complex is composed of six subunits: RnfA, RnfB, RnfC, RnfD, RnfE and RnfG.

Its subcellular location is the cell inner membrane. In terms of biological role, part of a membrane-bound complex that couples electron transfer with translocation of ions across the membrane. This chain is Ion-translocating oxidoreductase complex subunit A, found in Psychromonas ingrahamii (strain DSM 17664 / CCUG 51855 / 37).